The primary structure comprises 38 residues: Large ribosomal subunit protein bL12 (38 aa).

This sequence belongs to the bacterial ribosomal protein bL12 family. In terms of assembly, homodimer. Part of the ribosomal stalk of the 50S ribosomal subunit. Forms a multimeric L10(L12)X complex, where L10 forms an elongated spine to which 2 to 4 L12 dimers bind in a sequential fashion. Binds GTP-bound translation factors.

Functionally, forms part of the ribosomal stalk which helps the ribosome interact with GTP-bound translation factors. Is thus essential for accurate translation. This Salinivibrio costicola (Vibrio costicola) protein is Large ribosomal subunit protein bL12 (rplL).